Here is a 256-residue protein sequence, read N- to C-terminus: Thioredoxin-dependent peroxide reductase, mitochondrial (256 aa).

The transit peptide at 1 to 61 (MAAAVGRLLR…KLFSTSSSYH (61 aa)) directs the protein to the mitochondrion. The Thioredoxin domain occupies 63 to 221 (PAVTQHAPYF…TLRLVKAFQY (159 aa)). K83 is subject to N6-succinyllysine. Position 91 is an N6-acetyllysine; alternate (K91). K91 is subject to N6-succinyllysine; alternate. The active-site Cysteine sulfenic acid (-SOH) intermediate is C108. Residue T146 is modified to Phosphothreonine.

This sequence belongs to the peroxiredoxin family. AhpC/Prx1 subfamily. Homodimer; disulfide-linked, upon oxidation. 6 homodimers assemble to form a ring-like dodecamer. Interacts with NEK6. Interacts with LRRK2. Interacts with MAP3K13. Interacts with RPS6KC1 (via PX domain). In terms of processing, phosphorylated by LRRK2; phosphorylation reduces perodixase activity. The enzyme can be inactivated by further oxidation of the cysteine sulfenic acid (C(P)-SOH) to sulphinic acid (C(P)-SO2H) and sulphonic acid (C(P)-SO3H) instead of its condensation to a disulfide bond. Post-translationally, S-palmitoylated.

The protein localises to the mitochondrion. Its subcellular location is the cytoplasm. It is found in the early endosome. The enzyme catalyses a hydroperoxide + [thioredoxin]-dithiol = an alcohol + [thioredoxin]-disulfide + H2O. Its function is as follows. Thiol-specific peroxidase that catalyzes the reduction of hydrogen peroxide and organic hydroperoxides to water and alcohols, respectively. Plays a role in cell protection against oxidative stress by detoxifying peroxides. Acts synergistically with MAP3K13 to regulate the activation of NF-kappa-B in the cytosol. Required for the maintenance of physical strength. In Pongo abelii (Sumatran orangutan), this protein is Thioredoxin-dependent peroxide reductase, mitochondrial (PRDX3).